A 175-amino-acid chain; its full sequence is Protein GrpE (175 aa).

The tract at residues 1–35 is disordered; the sequence is MSEQKQEIENENAQNSENLQDDLQDNEKNETNELQ. The segment covering 25-35 has biased composition (basic and acidic residues); it reads DNEKNETNELQ.

Belongs to the GrpE family. As to quaternary structure, homodimer.

It localises to the cytoplasm. Functionally, participates actively in the response to hyperosmotic and heat shock by preventing the aggregation of stress-denatured proteins, in association with DnaK and GrpE. It is the nucleotide exchange factor for DnaK and may function as a thermosensor. Unfolded proteins bind initially to DnaJ; upon interaction with the DnaJ-bound protein, DnaK hydrolyzes its bound ATP, resulting in the formation of a stable complex. GrpE releases ADP from DnaK; ATP binding to DnaK triggers the release of the substrate protein, thus completing the reaction cycle. Several rounds of ATP-dependent interactions between DnaJ, DnaK and GrpE are required for fully efficient folding. This chain is Protein GrpE, found in Campylobacter jejuni (strain RM1221).